Reading from the N-terminus, the 241-residue chain is ATP synthase subunit a (241 aa).

The next 5 helical transmembrane spans lie at 30–50, 91–111, 128–148, 193–213, and 214–234; these read GQVFLTSWILLGALLVFISLG, FIGTLFLFVFVSNWGGALIPW, INTTIALALLVSLSYFYAGLS, LVVGVLVFLVPLILPIPVMFL, and GLFTSAIQALIFATLAAYYIG.

This sequence belongs to the ATPase A chain family. F-type ATPases have 2 components, CF(1) - the catalytic core - and CF(0) - the membrane proton channel. CF(1) has five subunits: alpha(3), beta(3), gamma(1), delta(1), epsilon(1). CF(0) has four main subunits: a, b, b' and c.

It localises to the cellular thylakoid membrane. In terms of biological role, key component of the proton channel; it plays a direct role in the translocation of protons across the membrane. This Prochlorococcus marinus (strain MIT 9301) protein is ATP synthase subunit a.